The sequence spans 538 residues: MSFRFDRSVFESADFNERLRERLTGALNPKSRRHVERADEAGNEDDSSGHQRKSGGSLDILKNDIIVEKVDFSRIPNLEILDLDVGLGVSSISSGGGGSSMMKGICKISIEGAMLQVRTVIESNLLMLSMADSPEFVTPTLITNDSFSLPITMTFSNIKMEAISKVFFVARNSGIGISFDDVVLDFKFDCSIKILQTTIEKRLKRAMELLFKDTLPTALFNMSQSWFTNSDGSRSSAKHKKDTCDENNQPSAPKIIFEDADLQELSPANMLRLSTLVSSRQTLSLHSTVSSTLSLIPGCLERQNLYRFISRMPSLSNYYSSYVDHKKERAGTPSLLMNKRPSVDYLLRRSSSSGNSLMSSQAYFDKESNLLPMEVLEENAYDLDVITDIQNKLYMRSTDHDEQVNHTKPRRRKIKIGKNKKDKPAYKEEIEQQEPVQSTITVSMPFEEPQIIIEHNDETEAVKEERESVLSSPKLIRSTMDKTYTNSRILNTLLQKNGNLLDEETRLRAQSIDSVAHTKMGYLLGLNHIATPPPPPYY.

Residues 1–224 (MSFRFDRSVF…LPTALFNMSQ (224 aa)) form the SMP-LTD domain. Disordered stretches follow at residues 26 to 55 (ALNPKSRRHVERADEAGNEDDSSGHQRKSG) and 231 to 251 (DGSRSSAKHKKDTCDENNQPS).

Belongs to the MDM34 family. In terms of assembly, component of the ER-mitochondria encounter structure (ERMES) or MDM complex, composed of MMM1, MDM10, MDM12 and MDM34.

The protein localises to the mitochondrion outer membrane. Functionally, component of the ERMES/MDM complex, which serves as a molecular tether to connect the endoplasmic reticulum (ER) and mitochondria. Components of this complex are involved in the control of mitochondrial shape and protein biogenesis, and function in nonvesicular lipid trafficking between the ER and mitochondria. MDM34 is required for the interaction of the ER-resident membrane protein MMM1 and the outer mitochondrial membrane-resident beta-barrel protein MDM10. This Candida glabrata (strain ATCC 2001 / BCRC 20586 / JCM 3761 / NBRC 0622 / NRRL Y-65 / CBS 138) (Yeast) protein is Mitochondrial distribution and morphology protein 34.